The primary structure comprises 112 residues: Hydrogenase maturation factor HypA (112 aa).

His-2 provides a ligand contact to Ni(2+). 4 residues coordinate Zn(2+): Cys-73, Cys-76, Cys-88, and Cys-91.

It belongs to the HypA/HybF family.

Its function is as follows. Involved in the maturation of [NiFe] hydrogenases. Required for nickel insertion into the metal center of the hydrogenase. This Synechococcus elongatus (strain ATCC 33912 / PCC 7942 / FACHB-805) (Anacystis nidulans R2) protein is Hydrogenase maturation factor HypA.